A 94-amino-acid chain; its full sequence is Copper resistance protein K (94 aa).

Residues 1–20 form the signal peptide; sequence MKQKLMVGAFIAAVSLSAAA.

In terms of assembly, monomer in the copper-bound form. Homodimer as apoprotein. Dissociates into monomers upon copper binding.

Its subcellular location is the periplasm. Functionally, involved in resistance to copper. Can bind up to 2 copper ions. Has higher affinity for Cu(+) than for Cu(2+). This is Copper resistance protein K (copK) from Cupriavidus metallidurans (strain ATCC 43123 / DSM 2839 / NBRC 102507 / CH34) (Ralstonia metallidurans).